The sequence spans 216 residues: Talanin (216 aa).

Isoform 4 is expressed in placenta, lung, kidney and pancreas.

May play a role in uric acid excretion. The chain is Talanin (ZNF365) from Homo sapiens (Human).